Here is a 288-residue protein sequence, read N- to C-terminus: NAD(P)H quinone oxidoreductase YCP4 (288 aa).

A Flavodoxin-like domain is found at isoleucine 3–phenylalanine 192. FMN is bound by residues serine 9 to histidine 13 and valine 110 to glycine 164. The disordered stretch occupies residues glycine 202–methionine 288. The span at lysine 205 to serine 254 shows a compositional bias: low complexity. Polar residues predominate over residues asparagine 261–methionine 288.

This sequence belongs to the WrbA family. It depends on FMN as a cofactor.

Its subcellular location is the cell membrane. It carries out the reaction a quinone + NADH + H(+) = a quinol + NAD(+). The enzyme catalyses a quinone + NADPH + H(+) = a quinol + NADP(+). Flavodoxin-like protein (FLP) that plays a role in cell wall integrity, oxidative stress protection and virulence. FLPs act as NAD(P)H quinone oxidoreductases. Reduces ubiquinone (coenzyme Q), enabling it to serve as an antioxidant in the membrane. The polypeptide is NAD(P)H quinone oxidoreductase YCP4 (Candida albicans (strain SC5314 / ATCC MYA-2876) (Yeast)).